Reading from the N-terminus, the 1091-residue chain is Error-prone DNA polymerase 1 (1091 aa).

The segment covering 1051-1064 (RGDEFHHGMPDDHR) has biased composition (basic and acidic residues). The segment at 1051 to 1080 (RGDEFHHGMPDDHRAIRKRPPPSNHDDDEV) is disordered.

The protein belongs to the DNA polymerase type-C family. DnaE2 subfamily.

The protein localises to the cytoplasm. It catalyses the reaction DNA(n) + a 2'-deoxyribonucleoside 5'-triphosphate = DNA(n+1) + diphosphate. DNA polymerase involved in damage-induced mutagenesis and translesion synthesis (TLS). It is not the major replicative DNA polymerase. This chain is Error-prone DNA polymerase 1, found in Agrobacterium fabrum (strain C58 / ATCC 33970) (Agrobacterium tumefaciens (strain C58)).